The chain runs to 551 residues: RanBD1 domain-containing protein C584.03c (551 aa).

Positions 1–309 constitute a RanBD1 domain; the sequence is MDELLNVASH…LLLKYADDET (309 aa). Serine 441 is subject to Phosphoserine. Residues 522–551 are disordered; sequence SVIPHSEPESSSKVINCQAKLNVEKEKKNP.

It localises to the nucleus. The polypeptide is RanBD1 domain-containing protein C584.03c (Schizosaccharomyces pombe (strain 972 / ATCC 24843) (Fission yeast)).